Reading from the N-terminus, the 453-residue chain is Allantoinase (453 aa).

6 residues coordinate Zn(2+): His59, His61, Lys146, His186, His242, and Asp315. An N6-carboxylysine modification is found at Lys146.

The protein belongs to the metallo-dependent hydrolases superfamily. Allantoinase family. Homotetramer. The cofactor is Zn(2+). Post-translationally, carboxylation allows a single lysine to coordinate two zinc ions.

The enzyme catalyses (S)-allantoin + H2O = allantoate + H(+). Its pathway is nitrogen metabolism; (S)-allantoin degradation; allantoate from (S)-allantoin: step 1/1. Its function is as follows. Catalyzes the conversion of allantoin (5-ureidohydantoin) to allantoic acid by hydrolytic cleavage of the five-member hydantoin ring. This Escherichia coli (strain K12 / MC4100 / BW2952) protein is Allantoinase.